The chain runs to 479 residues: 5-hydroxytryptamine receptor 2B (479 aa).

Topologically, residues 1-55 (MASSYKMSEQSTTSEHILQKTCDHLILTNRSGLETDSVAEEMKQTVEGQGHTVHW) are extracellular. Residue asparagine 29 is glycosylated (N-linked (GlcNAc...) asparagine). Residues 56–78 (AALLILAVIIPTIGGNILVILAV) traverse the membrane as a helical segment. At 79-89 (ALEKRLQYATN) the chain is on the cytoplasmic side. A helical membrane pass occupies residues 90–112 (YFLMSLAIADLLVGLFVMPIALL). Residues 113 to 128 (TIMFEAIWPLPLALCP) lie on the Extracellular side of the membrane. A disulfide bridge links cysteine 127 with cysteine 206. A helical transmembrane segment spans residues 129-150 (AWLFLDVLFSTASIMHLCAISL). Residues aspartate 134 and threonine 139 each coordinate ergotamine. The DRY motif; important for ligand-induced conformation changes motif lies at 151-153 (DRY). The Cytoplasmic portion of the chain corresponds to 151-170 (DRYIAIKKPIQANQCNSRAT). A helical membrane pass occupies residues 171–191 (AFIKITVVWLISIGIAIPVPI). Residues 192 to 215 (KGIETDVINPHNVTCELTKDRFGS) are Extracellular-facing. Ergotamine is bound at residue leucine 208. Positions 211-214 (DRFG) match the [DE]RFG motif; may stabilize a conformation that preferentially activates signaling via beta-arrestin family members motif. Residues 216-238 (FMVFGSLAAFFAPLTIMVVTYFL) form a helical membrane-spanning segment. At 239–323 (TIHTLQKKAY…TISNEQRASK (85 aa)) the chain is on the cytoplasmic side. The chain crosses the membrane as a helical span at residues 324-344 (ALGVVFFLFLLMWCPFFITNL). The Extracellular portion of the chain corresponds to 345 to 359 (TLALCDSCNQTTLKT). A disulfide bridge connects residues cysteine 349 and cysteine 352. Residues 360–381 (LLEIFVWIGYVSSGVNPLIYTL) form a helical membrane-spanning segment. An NPxxY motif; important for ligand-induced conformation changes and signaling motif is present at residues 375–379 (NPLIY). Topologically, residues 382 to 479 (FNKTFREAFG…DKAEEQVSYI (98 aa)) are cytoplasmic. A lipid anchor (S-palmitoyl cysteine) is attached at cysteine 396. The PDZ-binding motif lies at 477–479 (SYI).

This sequence belongs to the G-protein coupled receptor 1 family. As to quaternary structure, interacts (via C-terminus) with MPDZ. Ubiquitous. Detected in intestine, heart, skeletal muscle, testis, urinary bladder, stomach, liver, lung, brain and kidney. Detected in osteoblasts. Detected in the raphe nucleus in the brain, in dorsal root ganglion neurons, the brain stem, cerebellum and spinal cord. Detected in interstitial cells of Cajal in the small intestine.

It is found in the cell membrane. The protein localises to the synapse. The protein resides in the synaptosome. G-protein coupled receptor for 5-hydroxytryptamine (serotonin). Also functions as a receptor for various ergot alkaloid derivatives and psychoactive substances. Ligand binding causes a conformation change that triggers signaling via guanine nucleotide-binding proteins (G proteins) and modulates the activity of downstream effectors. HTR2B is coupled to G(q)/G(11) G alpha proteins and activates phospholipase C-beta, releasing diacylglycerol (DAG) and inositol 1,4,5-trisphosphate (IP3) second messengers that modulate the activity of phosphatidylinositol 3-kinase and promote the release of Ca(2+) ions from intracellular stores, respectively. Beta-arrestin family members inhibit signaling via G proteins and mediate activation of alternative signaling pathways. Plays a role in the regulation of dopamine and 5-hydroxytryptamine release, 5-hydroxytryptamine uptake and in the regulation of extracellular dopamine and 5-hydroxytryptamine levels, and thereby affects neural activity. May play a role in the perception of pain. Plays a role in the regulation of behavior, including impulsive behavior. Required for normal proliferation of embryonic cardiac myocytes and normal heart development. Protects cardiomyocytes against apoptosis. Plays a role in the adaptation of pulmonary arteries to chronic hypoxia. Plays a role in vasoconstriction. Required for normal osteoblast function and proliferation, and for maintaining normal bone density. Required for normal proliferation of the interstitial cells of Cajal in the intestine. In Mus musculus (Mouse), this protein is 5-hydroxytryptamine receptor 2B (Htr2b).